Reading from the N-terminus, the 435-residue chain is 3-phosphoshikimate 1-carboxyvinyltransferase (435 aa).

3-phosphoshikimate is bound by residues K15, S16, and R20. K15 is a phosphoenolpyruvate binding site. Residues G96 and R124 each coordinate phosphoenolpyruvate. S169, Q171, S195, D318, and K345 together coordinate 3-phosphoshikimate. Q171 lines the phosphoenolpyruvate pocket. The active-site Proton acceptor is D318. Phosphoenolpyruvate is bound by residues R349 and R393.

The protein belongs to the EPSP synthase family. In terms of assembly, monomer.

It is found in the cytoplasm. The enzyme catalyses 3-phosphoshikimate + phosphoenolpyruvate = 5-O-(1-carboxyvinyl)-3-phosphoshikimate + phosphate. It participates in metabolic intermediate biosynthesis; chorismate biosynthesis; chorismate from D-erythrose 4-phosphate and phosphoenolpyruvate: step 6/7. Its function is as follows. Catalyzes the transfer of the enolpyruvyl moiety of phosphoenolpyruvate (PEP) to the 5-hydroxyl of shikimate-3-phosphate (S3P) to produce enolpyruvyl shikimate-3-phosphate and inorganic phosphate. The polypeptide is 3-phosphoshikimate 1-carboxyvinyltransferase (Chlorobium chlorochromatii (strain CaD3)).